We begin with the raw amino-acid sequence, 2752 residues long: Serine/arginine repetitive matrix protein 2 (2752 aa).

An N-acetylmethionine modification is found at M1. Residues 60–92 (HERKRRVELRCLELEEMMEEQGYEEQQIQEKVA) are a coiled coil. Position 101 is an N6-acetyllysine (K101). Glycyl lysine isopeptide (Lys-Gly) (interchain with G-Cter in SUMO2) cross-links involve residues K108 and K130. A disordered region spans residues 141 to 2131 (ISDSYVDGSS…MSPTPLDRCR (1991 aa)). At Y145 the chain carries Phosphotyrosine. The residue at position 169 (K169) is an N6-acetyllysine. Low complexity predominate over residues 175 to 185 (RESSSSRSPTP). 2 stretches are compositionally biased toward basic residues: residues 186–197 (KQKKKKKKKDRG) and 207–249 (RERK…KRSR). A sufficient for RNA-binding region spans residues 197-259 (GRRSESSSPR…STTPAPKSRR (63 aa)). Phosphoserine is present on residues S220 and S222. Residues 263–290 (STSADSASSSDTSRSRSRSAAAKTHTTA) show a composition bias toward low complexity. The residue at position 286 (T286) is a Phosphothreonine. Phosphoserine is present on residues S295, S297, S300, S322, and S323. Residues 313-333 (PGTTSTQRPSSPETATKQPSS) are compositionally biased toward polar residues. Residues 335–347 (YEDKDKDKKEKSA) show a composition bias toward basic and acidic residues. Over residues 348 to 360 (TRPSPSPERSSTG) the composition is skewed to low complexity. Phosphoserine occurs at positions 351, 353, 357, and 358. Residues T359 and T367 each carry the phosphothreonine modification. S377 is subject to Phosphoserine. Polar residues predominate over residues 380–398 (PLATTPLSQEPVNPPSEAS). Residues T383 and T384 each carry the phosphothreonine modification. 5 positions are modified to phosphoserine: S387, S395, S398, S404, and S408. Basic and acidic residues predominate over residues 399-410 (PTRDRSPPKSPE). A compositionally biased stretch (low complexity) spans 411 to 421 (KLPQSSSSESS). A phosphoserine mark is found at S424, S435, S436, S437, S440, and S454. A compositionally biased stretch (basic residues) spans 461 to 483 (NRSHGRAKRDKSHSHTPSRRMGR). Phosphoserine is present on residues S484, S486, S506, S508, S510, S534, S536, and S543. Positions 491–536 (KRGRSRSRTPTKRGHSRSRSPQWRRSRSAQRWGRSRSPQRRGRSRS) are enriched in basic residues. Positions 537–546 (PQRPGWSRSR) are enriched in low complexity. Composition is skewed to basic residues over residues 547–564 (NTQR…RSHS), 571–723 (GRSR…RRGR), and 732–742 (NKSRTSQRRSR). 3 positions are modified to phosphoserine: S702, S704, and S706. Phosphoserine is present on residues S778, S780, and S783. Positions 790–805 (SQTPPRRSRSGSSQPK) are enriched in low complexity. Residues 806–816 (AKSRTPPRRSR) are compositionally biased toward basic residues. Residues 828 to 841 (KTPSRQSHSSSSPH) show a composition bias toward low complexity. A phosphoserine mark is found at S846 and S854. Residues 849–869 (PPRQGSITSPQANEQSVTPQR) show a composition bias toward polar residues. The residue at position 856 (T856) is a Phosphothreonine. 2 positions are modified to phosphoserine: S857 and S864. T866 bears the Phosphothreonine mark. A phosphoserine mark is found at S871, S875, S876, S908, S935, S950, S952, S954, S957, S968, S970, S972, S973, and S974. Low complexity-rich tracts occupy residues 901-917 (SSTP…SPQP) and 924-945 (SPRQ…TSRT). A phosphothreonine mark is found at T977 and T983. Phosphoserine occurs at positions 992 and 994. Y996 bears the Phosphotyrosine mark. T1003 is modified (phosphothreonine). Residues 1008–1017 (SLSGSKSPCP) show a composition bias toward low complexity. A phosphoserine mark is found at S1010, S1014, S1024, S1028, S1032, and S1042. Residues 1040 to 1064 (KSSTPPGESYFGVSSLQLKGQSQTS) are compositionally biased toward polar residues. T1043 is modified (phosphothreonine). Residue Y1049 is modified to Phosphotyrosine. Residues S1064, S1069, S1072, S1073, S1083, S1099, S1101, S1102, and S1103 each carry the phosphoserine modification. Positions 1071-1092 (TSSPEVRQSHSESPSLQSKSQT) are enriched in polar residues. Low complexity predominate over residues 1093–1104 (SPKGGRSRSSSP). A Phosphothreonine modification is found at T1106. Phosphoserine occurs at positions 1112, 1122, 1124, 1129, 1132, 1152, 1179, 1188, and 1198. The span at 1132 to 1159 (SPEQSRFQSDSSSYPTVDSNSLLGQSRL) shows a compositional bias: polar residues. A compositionally biased stretch (basic and acidic residues) spans 1204–1214 (DTLRTPPRERS). T1208 is modified (phosphothreonine). 9 positions are modified to phosphoserine: S1214, S1219, S1227, S1254, S1257, S1258, S1266, S1270, and S1271. Residues 1216-1233 (AGSSPETKEQNSALPTSS) show a composition bias toward polar residues. Residues 1283–1292 (TLDQSQSQAS) are compositionally biased toward polar residues. Phosphoserine occurs at positions 1311, 1318, 1320, 1326, 1329, 1336, 1348, 1368, 1382, 1383, 1384, 1387, 1401, 1403, and 1404. A compositionally biased stretch (polar residues) spans 1318 to 1328 (SNSPLRENSFG). Polar residues predominate over residues 1376–1386 (TRSSGHSSSEL). T1413 bears the Phosphothreonine mark. Phosphoserine is present on residues S1415, S1421, S1423, and S1424. At T1434 the chain carries Phosphothreonine. A compositionally biased stretch (low complexity) spans 1441–1452 (SGSSPGLRDGSG). Phosphoserine occurs at positions 1444 and 1451. The residue at position 1453 (T1453) is a Phosphothreonine. Residues 1453–1463 (TPSRHSLSGSS) are compositionally biased toward polar residues. Phosphoserine is present on residues S1458, S1460, S1462, and S1463. Phosphothreonine is present on T1472. 2 positions are modified to phosphoserine: S1482 and S1483. The residue at position 1492 (T1492) is a Phosphothreonine. A phosphoserine mark is found at S1497, S1499, S1501, and S1502. Residue T1511 is modified to Phosphothreonine. Phosphoserine occurs at positions 1517, 1519, 1521, and 1522. The residue at position 1531 (T1531) is a Phosphothreonine. A compositionally biased stretch (polar residues) spans 1534-1544 (GQRSRSGSSQE). Phosphoserine occurs at positions 1537, 1539, 1541, 1542, and 1552. Positions 1555–1567 (ERSESDSSPDSKA) are enriched in basic and acidic residues. The span at 1568–1577 (KTRTPLRQRS) shows a compositional bias: basic residues. Residues S1577, S1579, S1581, S1582, S1598, S1600, S1601, S1616, S1620, S1621, S1648, S1658, S1691, S1693, and S1694 each carry the phosphoserine modification. The span at 1638-1657 (SGSSSKGRGPSPEGSSSTES) shows a compositional bias: low complexity. A compositionally biased stretch (basic residues) spans 1681–1691 (KSRTPPRRRSS). T1698 bears the Phosphothreonine mark. S1727, S1729, S1731, S1732, S1762, and S1764 each carry phosphoserine. Basic residues-rich tracts occupy residues 1769 to 1789 (GLQR…RRRD) and 1798 to 1816 (SRRR…RRRG). Residues S1818, S1822, S1854, S1857, S1876, and S1878 each carry the phosphoserine modification. A compositionally biased stretch (basic residues) spans 1834 to 1854 (SSRRRRGRSRTPPTSRKRSRS). Over residues 1862-2068 (KRSRSRASPA…PRTARGKRSL (207 aa)) the composition is skewed to basic residues. At T1880 the chain carries Phosphothreonine. Residues S1884 and S1890 each carry the phosphoserine modification. Phosphothreonine is present on T1892. S1893, S1916, S1919, S1923, and S1925 each carry phosphoserine. T1927 and T1931 each carry phosphothreonine. Phosphoserine occurs at positions 1946 and 1948. Phosphothreonine occurs at positions 1950 and 1954. A phosphoserine mark is found at S1958 and S1960. Phosphothreonine is present on residues T1962 and T1966. S1970, S1972, and S1975 each carry phosphoserine. T1978 bears the Phosphothreonine mark. A phosphoserine mark is found at S1984, S1987, S1996, S1999, S2008, S2011, S2018, and S2020. Residue T2022 is modified to Phosphothreonine. A phosphoserine mark is found at S2030 and S2032. T2034 carries the phosphothreonine modification. 4 positions are modified to phosphoserine: S2042, S2044, S2046, and S2067. T2069 is modified (phosphothreonine). Low complexity predominate over residues 2070 to 2095 (RSPPAIRRRSASGSSSDRSRSATPPA). A phosphoserine mark is found at S2071 and S2090. T2092 carries the post-translational modification Phosphothreonine. Residues 2097 to 2124 (RNHSGSRTPPVALNSSRMSCFSRPSMSP) are compositionally biased toward polar residues. Residues S2100 and S2102 each carry the phosphoserine modification. T2104 bears the Phosphothreonine mark. Residues S2118, S2121, S2123, and S2132 each carry the phosphoserine modification. A Phosphothreonine modification is found at T2144. Omega-N-methylarginine is present on residues R2194, R2207, R2231, and R2246. S2272 carries the post-translational modification Phosphoserine. 2 positions are modified to omega-N-methylarginine: R2274 and R2288. Phosphothreonine is present on residues T2289, T2291, and T2302. At S2310 the chain carries Phosphoserine. Positions 2311 to 2342 (LTGSGTPPTAANYPSSSRTPQAPASANLVGPR) are disordered. Phosphothreonine is present on residues T2316 and T2329. The span at 2317–2334 (PPTAANYPSSSRTPQAPA) shows a compositional bias: polar residues. S2335 bears the Phosphoserine mark. R2342 bears the Omega-N-methylarginine mark. Residues S2343, S2368, and S2376 each carry the phosphoserine modification. T2381 is subject to Phosphothreonine. S2382 bears the Phosphoserine mark. R2384 is modified (asymmetric dimethylarginine; alternate). The residue at position 2384 (R2384) is an Omega-N-methylarginine; alternate. Residues 2389–2752 (AYERVSGRTS…PMRHRSSRSP (364 aa)) are disordered. Phosphoserine is present on residues S2394, S2398, and S2407. T2409 bears the Phosphothreonine mark. 6 positions are modified to phosphoserine: S2412, S2415, S2426, S2429, S2449, and S2453. Positions 2426-2439 (SPSSRMGQAPSQSL) are enriched in polar residues. Positions 2455 to 2473 (FSDQSRCLIAQTTPVAGSQ) are enriched in polar residues. Composition is skewed to low complexity over residues 2474–2487 (SLSS…TSSA), 2515–2526 (AQQPSALAALQP), and 2533–2567 (SSSS…EGSS). Position 2581 is a phosphoserine (S2581). T2583 carries the post-translational modification Phosphothreonine. K2587 participates in a covalent cross-link: Glycyl lysine isopeptide (Lys-Gly) (interchain with G-Cter in SUMO2). Residue T2599 is modified to Phosphothreonine. Residues 2608–2648 (SSSSSSSSSSSSSSSSSSSSSSSSSSSSSSSSSSSSSSSSS) show a composition bias toward low complexity. Residues 2651-2668 (PAKPGPQALPKPASPKKP) show a composition bias toward pro residues. Residues S2664, S2675, S2677, S2684, S2688, S2690, S2692, S2694, S2702, and S2706 each carry the phosphoserine modification. The segment covering 2669–2689 (PPGERRSRSPRKPIDSLRDSR) has biased composition (basic and acidic residues). Residues 2707-2716 (PRDQQSSSSE) show a composition bias toward low complexity. Residues 2717–2729 (RGSRRGQRGDSRS) are compositionally biased toward basic and acidic residues. T2738 is subject to Phosphothreonine. S2740 carries the phosphoserine modification. The segment covering 2743 to 2752 (PMRHRSSRSP) has biased composition (basic residues).

The protein belongs to the CWC21 family. In terms of assembly, component of pre-catalytic, catalytic and post-catalytic spliceosome complexes. Found in a pre-mRNA splicing complex with SFRS4, SFRS5, SNRP70, SNRPA1, SRRM1 and SRRM2. Component of the minor spliceosome, which splices U12-type introns. Interacts with DHX8. Interacts with CACTIN. As to expression, expressed in liver, placenta, and white blood cells.

It localises to the nucleus. The protein resides in the nucleus speckle. Its function is as follows. Required for pre-mRNA splicing as component of the spliceosome. As a component of the minor spliceosome, involved in the splicing of U12-type introns in pre-mRNAs. This Homo sapiens (Human) protein is Serine/arginine repetitive matrix protein 2 (SRRM2).